A 408-amino-acid chain; its full sequence is Succinylornithine transaminase (408 aa).

Lys-252 is subject to N6-(pyridoxal phosphate)lysine.

It belongs to the class-III pyridoxal-phosphate-dependent aminotransferase family. AstC subfamily. It depends on pyridoxal 5'-phosphate as a cofactor.

It carries out the reaction N(2)-succinyl-L-ornithine + 2-oxoglutarate = N-succinyl-L-glutamate 5-semialdehyde + L-glutamate. It functions in the pathway amino-acid degradation; L-arginine degradation via AST pathway; L-glutamate and succinate from L-arginine: step 3/5. Its function is as follows. Catalyzes the transamination of N(2)-succinylornithine and alpha-ketoglutarate into N(2)-succinylglutamate semialdehyde and glutamate. Can also act as an acetylornithine aminotransferase. The chain is Succinylornithine transaminase from Salmonella enteritidis PT4 (strain P125109).